Consider the following 92-residue polypeptide: Small ribosomal subunit protein uS19c (92 aa).

The protein belongs to the universal ribosomal protein uS19 family.

It is found in the plastid. It localises to the chloroplast. Its function is as follows. Protein S19 forms a complex with S13 that binds strongly to the 16S ribosomal RNA. This chain is Small ribosomal subunit protein uS19c (rps19), found in Pisum sativum (Garden pea).